A 41-amino-acid polypeptide reads, in one-letter code: Large ribosomal subunit protein bL36 (41 aa).

Belongs to the bacterial ribosomal protein bL36 family.

The sequence is that of Large ribosomal subunit protein bL36 from Caulobacter vibrioides (strain ATCC 19089 / CIP 103742 / CB 15) (Caulobacter crescentus).